Consider the following 872-residue polypeptide: Facilitated trehalose transporter Tret1 (872 aa).

Disordered regions lie at residues 1–40 (MSGR…LKEK), 53–217 (VESN…KATS), 262–281 (SSSE…RKHQ), and 293–315 (KVLQ…KRLI). Over 1-406 (MSGRDNRGAG…VYRPTTNPIY (406 aa)) the chain is Cytoplasmic. Gly residues predominate over residues 8 to 22 (GAGGGGGGGGGGSGG). 3 stretches are compositionally biased toward low complexity: residues 55-68 (SNLS…SLDT), 84-98 (RHPQ…QQQR), and 121-132 (PPTQQQPQQQHQ). Ser262, Ser263, and Ser264 each carry phosphoserine. Phosphoserine occurs at positions 334 and 336. Residues 340-361 (FLTSRQHFQQQRSISTDSRKSR) form a disordered region. Residues 344-355 (RQHFQQQRSIST) show a composition bias toward polar residues. Residues 407–427 (IWTQVLAALSVSLGSLVVGFV) form a helical membrane-spanning segment. Over 428 to 454 (SAYTSPALITMTNGNITSFEVTPQAAS) the chain is Extracellular. Asn442 carries N-linked (GlcNAc...) asparagine glycosylation. A helical transmembrane segment spans residues 455-475 (WVGGIMPLAGLLGGIAGGPFI). Over 476–488 (EYLGRRNTILTTA) the chain is Cytoplasmic. Residues 489–509 (VPFIVSSLLIACAVNITMVLL) form a helical membrane-spanning segment. Residues 510–511 (GR) are Extracellular-facing. The chain crosses the membrane as a helical span at residues 512-532 (FLAGFCVGIASLSLPVYLGET). Residues 533–538 (VQPEVR) lie on the Cytoplasmic side of the membrane. A helical transmembrane segment spans residues 539–559 (GTLGLLPTAFGNIGILLCFVA). Residues 560–566 (GTYMDWS) lie on the Extracellular side of the membrane. The helical transmembrane segment at 567–587 (MLAFLGAALPVPFLILMFLIP) threads the bilayer. Residues 588-650 (ETPRWYVSRG…ELLKRNNLKP (63 aa)) lie on the Cytoplasmic side of the membrane. Residues 651-671 (LSISLGLMFFQQLSGINAVIF) form a helical membrane-spanning segment. Over 672–687 (YTVQIFKDAGSTIDGN) the chain is Extracellular. A helical membrane pass occupies residues 688–708 (VCTIIVGIVNFMATFIGIILI). The Cytoplasmic segment spans residues 709-714 (DRAGRK). The chain crosses the membrane as a helical span at residues 715–735 (ILLYVSNVAMIITLFVLGGFF). The Extracellular portion of the chain corresponds to 736–755 (YCKDKAGIDVSNVGWLPLSC). Residues 756–776 (FVVYILGFSLGFGPIPWLMMG) form a helical membrane-spanning segment. At 777 to 784 (EILPAKIR) the chain is on the cytoplasmic side. A helical membrane pass occupies residues 785–803 (GSAASVATAFNWTCTFVVT). Residues 804–816 (KTFQDMLDVIGSY) are Extracellular-facing. The chain crosses the membrane as a helical span at residues 817-837 (GAFWLFGAICFIGLFFVIIYV). At 838–872 (PETQGKTLEDIERKMMGRVRRMSSVANIKPLSFNM) the chain is on the cytoplasmic side. Residues Ser860 and Ser861 each carry the phosphoserine modification.

This sequence belongs to the major facilitator superfamily. Sugar transporter (TC 2.A.1.1) family. Trehalose transporter subfamily.

It is found in the cell membrane. In terms of biological role, low-capacity facilitative transporter for trehalose. Does not transport maltose, sucrose or lactose. Mediates the bidirectional transfer of trehalose. Responsible for the transport of trehalose synthesized in the fat body and the incorporation of trehalose into other tissues that require a carbon source, thereby regulating trehalose levels in the hemolymph. The protein is Facilitated trehalose transporter Tret1 of Drosophila willistoni (Fruit fly).